The sequence spans 283 residues: Bifunctional protein FolD (283 aa).

Residues 166 to 168 (GAS) and Ile-232 contribute to the NADP(+) site.

It belongs to the tetrahydrofolate dehydrogenase/cyclohydrolase family. In terms of assembly, homodimer.

The enzyme catalyses (6R)-5,10-methylene-5,6,7,8-tetrahydrofolate + NADP(+) = (6R)-5,10-methenyltetrahydrofolate + NADPH. It carries out the reaction (6R)-5,10-methenyltetrahydrofolate + H2O = (6R)-10-formyltetrahydrofolate + H(+). The protein operates within one-carbon metabolism; tetrahydrofolate interconversion. Functionally, catalyzes the oxidation of 5,10-methylenetetrahydrofolate to 5,10-methenyltetrahydrofolate and then the hydrolysis of 5,10-methenyltetrahydrofolate to 10-formyltetrahydrofolate. The chain is Bifunctional protein FolD from Mannheimia succiniciproducens (strain KCTC 0769BP / MBEL55E).